We begin with the raw amino-acid sequence, 361 residues long: Protein SGT1 homolog (361 aa).

3 TPR repeats span residues 3 to 36, 37 to 70, and 71 to 104; these read ASDL…GPAT, ADLY…DPTM, and HKAY…APGD. Thr-150 carries the phosphothreonine modification. The CS domain maps to 159–248; it reads KPKYRHDYYN…AEQVTWTTLD (90 aa). The tract at residues 255-295 is disordered; the sequence is AIPQKISTPAETAPRPSYPSSKSKKDWDKLEAEVKKEEKEE. Residue Thr-262 is modified to Phosphothreonine. Positions 271 to 361 constitute an SGS domain; that stretch reads SYPSSKSKKD…DGMELKKWEI (91 aa). The span at 277–295 shows a compositional bias: basic and acidic residues; the sequence is SKKDWDKLEAEVKKEEKEE.

This sequence belongs to the SGT1 family. Post-translationally, constitutively phosphorylated at Thr-262 and phosphorylated at Thr-150 upon infection with the fungal pathogen Ustilago maydis.

It is found in the cytoplasm. The protein localises to the nucleus. May act as positive regulator of basal defense. May be involved in basal disease resistance to the fungal pathogen Ustilago maydis. The sequence is that of Protein SGT1 homolog from Zea mays (Maize).